The primary structure comprises 131 residues: Snaclec alboaggregin-A subunit alpha (131 aa).

One can recognise a C-type lectin domain in the interval 1-131; it reads DCPSDWSSYD…EYPFVCKFXR (131 aa). 3 disulfide bridges follow: C2–C13, C30–C127, and C102–C119.

The protein belongs to the snaclec family. As to quaternary structure, heterotetramer of the subunits alpha, alpha', beta and beta'; disulfide-linked. In terms of tissue distribution, expressed by the venom gland.

It is found in the secreted. Functionally, potent platelet activator that aggregates platelets via both GPIbalpha (GP1BA) and GPVI (GP6). Induces a tyrosine phosphorylation profile in platelets that resembles this produced by collagen, involving the time dependent tyrosine phosphorylation of Fc receptor gamma chain (FCGR1A), phospholipase Cgamma2 (PLCG2), and LAT. The chain is Snaclec alboaggregin-A subunit alpha from Trimeresurus albolabris (White-lipped pit viper).